The chain runs to 153 residues: Insulin-like growth factor 1 (153 aa).

Residues glycine 49–threonine 77 form a b region. Disulfide bonds link cysteine 54–cysteine 96, cysteine 66–cysteine 109, and cysteine 95–cysteine 100. The c stretch occupies residues glycine 78–threonine 89. The segment at glycine 90 to alanine 110 is a. The segment at proline 111 to alanine 118 is d. The propeptide at arginine 119 to methionine 153 is e peptide. The segment at serine 120–methionine 153 is disordered. Basic and acidic residues predominate over residues arginine 125 to leucine 138. Polar residues predominate over residues lysine 139–methionine 153.

Belongs to the insulin family. In terms of assembly, forms a ternary complex with IGFR1 and ITGAV:ITGB3. Forms a ternary complex with IGFR1 and ITGA6:ITGB4. Forms a ternary complex with IGFBP3 and ALS.

It is found in the secreted. Functionally, the insulin-like growth factors, isolated from plasma, are structurally and functionally related to insulin but have a much higher growth-promoting activity. May be a physiological regulator of [1-14C]-2-deoxy-D-glucose (2DG) transport and glycogen synthesis in osteoblasts. Stimulates glucose transport in bone-derived osteoblastic (PyMS) cells and is effective at much lower concentrations than insulin, not only regarding glycogen and DNA synthesis but also with regard to enhancing glucose uptake. May play a role in synapse maturation. Ca(2+)-dependent exocytosis of IGF1 is required for sensory perception of smell in the olfactory bulb. Acts as a ligand for IGF1R. Binds to the alpha subunit of IGF1R, leading to the activation of the intrinsic tyrosine kinase activity which autophosphorylates tyrosine residues in the beta subunit thus initiating a cascade of down-stream signaling events leading to activation of the PI3K-AKT/PKB and the Ras-MAPK pathways. Binds to integrins ITGAV:ITGB3 and ITGA6:ITGB4. Its binding to integrins and subsequent ternary complex formation with integrins and IGFR1 are essential for IGF1 signaling. Induces the phosphorylation and activation of IGFR1, MAPK3/ERK1, MAPK1/ERK2 and AKT1. As part of the MAPK/ERK signaling pathway, acts as a negative regulator of apoptosis in cardiomyocytes via promotion of STUB1/CHIP-mediated ubiquitination and degradation of ICER-type isoforms of CREM. In Sus scrofa (Pig), this protein is Insulin-like growth factor 1.